Here is a 141-residue protein sequence, read N- to C-terminus: Hemoglobin subunit alpha (141 aa).

Residues 1–141 (VLSAEDKANV…VSTVLTSKYR (141 aa)) form the Globin domain. Ser-3 carries the post-translational modification Phosphoserine. N6-succinyllysine occurs at positions 7 and 11. N6-acetyllysine; alternate is present on Lys-16. Lys-16 carries the N6-succinyllysine; alternate modification. Residue Tyr-24 is modified to Phosphotyrosine. The residue at position 35 (Ser-35) is a Phosphoserine. Lys-40 is subject to N6-succinyllysine. A Phosphoserine modification is found at Ser-49. His-58 provides a ligand contact to O2. His-87 provides a ligand contact to heme b. Ser-102 carries the post-translational modification Phosphoserine. Thr-108 carries the phosphothreonine modification. Phosphoserine is present on residues Ser-124 and Ser-131. A phosphothreonine mark is found at Thr-134 and Thr-137. Ser-138 is modified (phosphoserine).

It belongs to the globin family. In terms of assembly, heterotetramer of two alpha chains and two beta chains. As to expression, red blood cells.

Functionally, involved in oxygen transport from the lung to the various peripheral tissues. This Peromyscus crinitus (Canyon mouse) protein is Hemoglobin subunit alpha.